Consider the following 694-residue polypeptide: MQNSDSGSDSATSVALRTSASAQAPVVQPVPASQQVQTVQHVYPAQVQYVEGDTVYTNGAIRTAYSYNAEAQIYAPSSGSSYFDSQGGGAQVTTVVSSPTAIPSHSMVGIAMDVSGSQIISSSGAYLIHGGLENSRHTPSHTSRTFPATLEMAIENLQKNEGITSHKSSLLNSHLQWLLDNYETAEGVSLPRSSLYNHYLRHCQDHKLDPVNAASFGKLIRSVFMGLRTRRLGTRGNSKYHYYGIRLKPDSPLNRLQEDTQYMAIRQQPIHQKQRYRPAQKMDGMGENTANSSQHTSPEQSVAAQSQHHQQFIDTAHVFPDFPEPDLGNVLLPEGITMTDIKNLQLMYRRHCEATIDVVMNLQFQYIEKLWQAFWNSKPSSPDGSNPMNSEDEQEPIIPKDKLMVLCKYEPIMRWMRNCDHILYQALVEILIPDVLRPVPSTLTQAIRNFAKSLEGWLTNAMCDFPQQIVHAKVGVVSAFAQTLRRYTSLNHLAQAARAVLQNTSQINQMLSDLNRVDFANVQEQASWVCQCEEGMVQKLEQDFKLTLQQQSSLDQWANWLDNVVTQVLKPHEGSPSFPKAARQFLLKWSFYSSMVIRDLTLRSAASFGSFHLIRLLYDEYMFYLVEHRVAQATGETPIAVMGEFSDFASMSPVLMDKDDVSELGSDNDGDPRISGQPPVKRERVDLNHSMQEM.

The RFX-type winged-helix DNA-binding region spans 174-249; that stretch reads HLQWLLDNYE…YHYYGIRLKP (76 aa). Disordered regions lie at residues 268-309 and 659-694; these read QPIH…SQHH and DDVS…MQEM. Residues 288 to 299 show a composition bias toward polar residues; it reads NTANSSQHTSPE. The span at 300–309 shows a compositional bias: low complexity; it reads QSVAAQSQHH.

The protein belongs to the RFX family. As to quaternary structure, homodimer. Heterodimer; heterodimerizes with other rfx proteins.

The protein resides in the nucleus. The protein localises to the cytoplasm. In terms of biological role, transcription factor that acts as a key regulator of ciliogenesis. Specifically regulates expression of genes required for cilium assembly and function. Recognizes and binds the X-box, a regulatory motif with DNA sequence 5'-GTNRCC(0-3N)RGYAAC-3' present on promoters. Required for neural tube closure and neural ciliogenesis. The chain is DNA-binding protein RFX2 (rfx2) from Xenopus tropicalis (Western clawed frog).